Here is a 456-residue protein sequence, read N- to C-terminus: Exodeoxyribonuclease 7 large subunit (456 aa).

It belongs to the XseA family. In terms of assembly, heterooligomer composed of large and small subunits.

It localises to the cytoplasm. It carries out the reaction Exonucleolytic cleavage in either 5'- to 3'- or 3'- to 5'-direction to yield nucleoside 5'-phosphates.. Its function is as follows. Bidirectionally degrades single-stranded DNA into large acid-insoluble oligonucleotides, which are then degraded further into small acid-soluble oligonucleotides. In Lactobacillus gasseri (strain ATCC 33323 / DSM 20243 / BCRC 14619 / CIP 102991 / JCM 1131 / KCTC 3163 / NCIMB 11718 / NCTC 13722 / AM63), this protein is Exodeoxyribonuclease 7 large subunit.